A 105-amino-acid polypeptide reads, in one-letter code: Ketoisovalerate oxidoreductase subunit VorD (105 aa).

4Fe-4S ferredoxin-type domains follow at residues 44 to 73 (FMPV…IKED) and 74 to 103 (GFVA…MVRE). [4Fe-4S] cluster is bound by residues Cys53, Cys56, Cys59, Cys63, Cys83, Cys86, Cys89, and Cys93.

Heterotetramer of one alpha, one beta, one delta and one gamma chain. [4Fe-4S] cluster is required as a cofactor.

It carries out the reaction 3-methyl-2-oxobutanoate + 2 oxidized [2Fe-2S]-[ferredoxin] + CoA = 2-methylpropanoyl-CoA + 2 reduced [2Fe-2S]-[ferredoxin] + CO2 + H(+). This is Ketoisovalerate oxidoreductase subunit VorD (vorD) from Pyrococcus abyssi (strain GE5 / Orsay).